The following is a 736-amino-acid chain: Polyphosphate kinase (736 aa).

Asparagine 91 provides a ligand contact to ATP. 2 residues coordinate Mg(2+): arginine 421 and arginine 451. Histidine 481 functions as the Phosphohistidine intermediate in the catalytic mechanism. Tyrosine 514, arginine 610, and histidine 638 together coordinate ATP.

Belongs to the polyphosphate kinase 1 (PPK1) family. Mg(2+) is required as a cofactor. An intermediate of this reaction is the autophosphorylated ppk in which a phosphate is covalently linked to a histidine residue through a N-P bond.

It carries out the reaction [phosphate](n) + ATP = [phosphate](n+1) + ADP. Catalyzes the reversible transfer of the terminal phosphate of ATP to form a long-chain polyphosphate (polyP). This chain is Polyphosphate kinase, found in Pseudomonas syringae pv. tomato (strain ATCC BAA-871 / DC3000).